Consider the following 148-residue polypeptide: Caltractin (148 aa).

4 EF-hand domains span residues 4–39, 40–75, 77–112, and 113–148; these read EQKQ…LGFE, PKKE…KMGE, DSRE…LGEN, and LTDE…TSLF. Aspartate 17, aspartate 19, serine 21, threonine 23, glutamate 28, aspartate 53, aspartate 55, serine 57, threonine 59, and glutamate 64 together coordinate Ca(2+). Ca(2+) is bound by residues aspartate 126, aspartate 128, aspartate 130, glutamate 132, and glutamate 137.

The protein belongs to the centrin family. Ubiquitous.

In terms of biological role, this calcium-binding protein is found in the basal body complexes (the functional homolog of the centrosome in animal cell). In mitotic cells it is specifically associated with the poles of the mitotic spindles at the sites of the duplicated basal body complexes. The sequence is that of Caltractin from Spermatozopsis similis (Green alga).